The chain runs to 699 residues: LMBR1 domain-containing protein 2 homolog (699 aa).

Residues 1 to 3 (MAY) are Extracellular-facing. Residues 4–26 (LLTFGIIAALCLASISLYRYGNI) form a helical membrane-spanning segment. Residues 27–30 (PRQH) lie on the Cytoplasmic side of the membrane. A helical transmembrane segment spans residues 31 to 51 (ILVTLSVLTAWCFSFLIVFTI). Topologically, residues 52 to 106 (PLDVTSTLYRQCLAEHKLALDAAGNASTTANITPPPECQEPWGMVPESVFPNLWR) are extracellular. Residue Asn76 is glycosylated (N-linked (GlcNAc...) asparagine). A helical membrane pass occupies residues 107 to 127 (IIYWSSQFLTWLIMPLMQSYL). Residues 128-144 (KAGDFTIKGKLKSALIE) are Cytoplasmic-facing. The helical transmembrane segment at 145-165 (NAIYYGSYLFICGVLLIYIAV) threads the bilayer. Over 166-181 (KGVPLDWQKLKAIASS) the chain is Extracellular. The chain crosses the membrane as a helical span at residues 182–202 (ASNTWGLFLLILLLGYALVEV). Over 203–381 (PRSLWNNAKP…ECLLKAPFLK (179 aa)) the chain is Cytoplasmic. A helical transmembrane segment spans residues 382–402 (TLCVVTATMSAMVVWSEVTFF). The Extracellular segment spans residues 403–426 (SRDPVLSIFANVIYLAKESYDFFT). A helical transmembrane segment spans residues 427 to 447 (IEVFSMMVLCYFFYCTYSTIL). The Cytoplasmic portion of the chain corresponds to 448-467 (RIRFLNLYYLAPHHQTNEHS). The helical transmembrane segment at 468-488 (LIFSGMLLCRLTPPMCLNFLG) threads the bilayer. The Extracellular portion of the chain corresponds to 489–514 (LIHMDSHIIPERMMETYYTRIMGHMD). Residues 515-535 (VIGIISNGFNIYFPMCMLAFC) form a helical membrane-spanning segment. Over 536–699 (LSTWFSLGSR…PPPRGLFDDV (164 aa)) the chain is Cytoplasmic. Residues 564 to 592 (ELVQEGKDLIAREKRRRQRAEEAMARRRD) are a coiled coil. Residues 669 to 699 (FRGTSELDPDYEAENERRIVGPPPRGLFDDV) are disordered.

Belongs to the LIMR family.

The protein resides in the membrane. In Drosophila pseudoobscura pseudoobscura (Fruit fly), this protein is LMBR1 domain-containing protein 2 homolog.